The primary structure comprises 301 residues: Acetylglutamate kinase (301 aa).

Residues 68 to 69 (GG), Arg-90, and Asn-195 contribute to the substrate site.

This sequence belongs to the acetylglutamate kinase family. ArgB subfamily.

The protein resides in the cytoplasm. The enzyme catalyses N-acetyl-L-glutamate + ATP = N-acetyl-L-glutamyl 5-phosphate + ADP. It participates in amino-acid biosynthesis; L-arginine biosynthesis; N(2)-acetyl-L-ornithine from L-glutamate: step 2/4. Functionally, catalyzes the ATP-dependent phosphorylation of N-acetyl-L-glutamate. The protein is Acetylglutamate kinase of Pseudomonas entomophila (strain L48).